The sequence spans 201 residues: Ras-related protein Rab-1B (201 aa).

At Met-1 the chain carries N-acetylmethionine. Residues Ser-17, Gly-18, Val-19, Gly-20, Lys-21, Ser-22, Cys-23, Tyr-33, Thr-34, Glu-35, Ser-36, Ser-39, and Thr-40 each contribute to the GTP site. Mg(2+) is bound at residue Ser-22. The short motif at 30-45 (DDTYTESYISTIGVDF) is the Switch 1 element. Residues Thr-40 and Asp-63 each coordinate Mg(2+). The segment at 64–83 (TAGQERFRTITSSYYRGAHG) is switch 2 region; required for interaction with REP1/CHM. A Switch 2 motif is present at residues 65–80 (AGQERFRTITSSYYRG). Gly-66 lines the GTP pocket. Ser-76 is subject to (Microbial infection) O-(2-cholinephosphoryl)serine. (Microbial infection) O-AMP-tyrosine is present on Tyr-77. Positions 121, 122, 124, 151, 152, and 153 each coordinate GTP. A disordered region spans residues 174–201 (GPGAASGGERPNLKIDSTPVKPAGGGCC). Residues Cys-200 and Cys-201 are each lipidated (S-geranylgeranyl cysteine). Residue Cys-201 is modified to Cysteine methyl ester.

The protein belongs to the small GTPase superfamily. Rab family. Interacts with MICAL1 and MICAL2. Interacts (in GTP-bound form) with MICALCL, MICAL1 and MILCAL3. Interacts with GDI1; the interaction requires the GDP-bound state. Interacts with CHM/REP1; the interaction requires the GDP-bound form and is necessary for prenylation by GGTase II. Interacts with RabGAP TBC1D20. Interacts (in GDP-bound form) with lipid phosphatase MTMR6 (via GRAM domain); the interaction regulates MTMR6 recruitment to the endoplasmic reticulum-Golgi intermediate compartment. Interacts (in GDP-bound form) with lipid phosphatase MTMR7. As to quaternary structure, (Microbial infection) Interacts with L.pneumophila AnkX. Interacts with L.pneumophila Lem3. Interacts with L.pneumophila SidD. Interacts with L.pneumophila DrrA. It depends on Mg(2+) as a cofactor. In terms of processing, prenylated; by GGTase II, only after interaction of the substrate with Rab escort protein 1 (REP1). (Microbial infection) AMPylation at Tyr-77 by L.pneumophila DrrA occurs in the switch 2 region and leads to moderate inactivation of the GTPase activity. It appears to prolong the lifetime of the GTP state of RAB1B by restricting access of GTPase effectors to switch 2 and blocking effector-stimulated GTP hydrolysis, thereby rendering RAB1B constitutively active. It is later de-AMPylated by L.pneumophila SidD, releasing RAB1B from bacterial phagosomes. Post-translationally, (Microbial infection) Phosphocholinated at Ser-76 by L.pneumophila AnkX, leading to displace GDP dissociation inhibitors (GDI). Both GDP-bound and GTP-bound forms can be phosphocholinated. Dephosphocholinated by L.pneumophila Lem3, restoring accessibility to L.pneumophila GTPase effector LepB. In terms of processing, (Microbial infection) Glycosylated by S.typhimurium protein Ssek3: arginine GlcNAcylation prevents GTPase activity, thereby disrupting vesicular protein transport from the endoplasmic reticulum (ER) to the Golgi compartment.

Its subcellular location is the cytoplasm. The protein resides in the membrane. It is found in the preautophagosomal structure membrane. The protein localises to the perinuclear region. It carries out the reaction GTP + H2O = GDP + phosphate + H(+). Regulated by guanine nucleotide exchange factors (GEFs) which promote the exchange of bound GDP for free GTP. Regulated by GTPase activating proteins (GAPs) including TBC1D20 which increases the GTP hydrolysis activity. Inhibited by GDP dissociation inhibitors (GDIs). Its function is as follows. The small GTPases Rab are key regulators of intracellular membrane trafficking, from the formation of transport vesicles to their fusion with membranes. Rabs cycle between an inactive GDP-bound form and an active GTP-bound form that is able to recruit to membranes different set of downstream effectors directly responsible for vesicle formation, movement, tethering and fusion. Plays a role in the initial events of the autophagic vacuole development which take place at specialized regions of the endoplasmic reticulum. Regulates vesicular transport between the endoplasmic reticulum and successive Golgi compartments. Required to modulate the compacted morphology of the Golgi. Promotes the recruitment of lipid phosphatase MTMR6 to the endoplasmic reticulum-Golgi intermediate compartment. The chain is Ras-related protein Rab-1B from Homo sapiens (Human).